The following is a 106-amino-acid chain: Large ribosomal subunit protein bL21 (106 aa).

This sequence belongs to the bacterial ribosomal protein bL21 family. In terms of assembly, part of the 50S ribosomal subunit. Contacts protein L20.

In terms of biological role, this protein binds to 23S rRNA in the presence of protein L20. This Xanthomonas campestris pv. campestris (strain ATCC 33913 / DSM 3586 / NCPPB 528 / LMG 568 / P 25) protein is Large ribosomal subunit protein bL21.